The primary structure comprises 134 residues: ATP synthase epsilon chain (134 aa).

It belongs to the ATPase epsilon chain family. As to quaternary structure, F-type ATPases have 2 components, CF(1) - the catalytic core - and CF(0) - the membrane proton channel. CF(1) has five subunits: alpha(3), beta(3), gamma(1), delta(1), epsilon(1). CF(0) has three main subunits: a, b and c.

The protein resides in the cell inner membrane. Functionally, produces ATP from ADP in the presence of a proton gradient across the membrane. The protein is ATP synthase epsilon chain of Solibacter usitatus (strain Ellin6076).